Reading from the N-terminus, the 149-residue chain is Oocyte-expressed protein homolog (149 aa).

A disordered region spans residues 1–23; it reads MVDDAGTAESQRGKQTPADSLEQ. A compositionally biased stretch (polar residues) spans 8–18; that stretch reads AESQRGKQTPA. Residues 49–110 enclose the KH; atypical domain; that stretch reads PLVFYLEAWL…SVQNRVKSML (62 aa).

It belongs to the KHDC1 family. In terms of assembly, component of the subcortical maternal complex (SCMC), at least composed of NLRP5, KHDC3, OOEP, and TLE6. Within the complex, interacts with NLRP5, KHDC3 and TLE6. As part of the SCMC interacts with the SCMC-associated protein NLRP4F. The SCMC may facilitate translocation of its components between the nuclear and cytoplasmic compartments. Forms a scaffold complex with KHDC3/FILIA, and interacts with BLM and TRIM25 at DNA replication forks.

It localises to the cytoplasm. It is found in the nucleus. In terms of biological role, component of the subcortical maternal complex (SCMC), a multiprotein complex that plays a key role in early embryonic development. The SCMC complex is a structural constituent of cytoplasmic lattices, which consist in fibrous structures found in the cytoplasm of oocytes and preimplantation embryos. They are required to store maternal proteins critical for embryonic development, such as proteins that control epigenetic reprogramming of the preimplantation embryo, and prevent their degradation or activation. As part of the OOEP-KHDC3 scaffold, recruits BLM and TRIM25 to DNA replication forks, thereby promoting the ubiquitination of BLM by TRIM25, enhancing BLM retainment at replication forks and therefore promoting stalled replication fork restart. Positively regulates the homologous recombination-mediated DNA double-strand break (DSB) repair pathway by regulating ATM activation and RAD51 recruitment to DSBs in oocytes. Thereby contributes to oocyte survival and the resumption and completion of meiosis. This chain is Oocyte-expressed protein homolog (OOEP), found in Papio anubis (Olive baboon).